The primary structure comprises 303 residues: N-acetyl-D-glucosamine kinase (303 aa).

ATP contacts are provided by residues 4–11 and 133–140; these read GFDIGGTK and GVGGGLIF. Residues histidine 157, cysteine 177, cysteine 179, and cysteine 184 each coordinate Zn(2+).

It belongs to the ROK (NagC/XylR) family. NagK subfamily.

It carries out the reaction N-acetyl-D-glucosamine + ATP = N-acetyl-D-glucosamine 6-phosphate + ADP + H(+). The protein operates within cell wall biogenesis; peptidoglycan recycling. Catalyzes the phosphorylation of N-acetyl-D-glucosamine (GlcNAc) derived from cell-wall degradation, yielding GlcNAc-6-P. The polypeptide is N-acetyl-D-glucosamine kinase (Escherichia coli O9:H4 (strain HS)).